Reading from the N-terminus, the 419-residue chain is Serine hydroxymethyltransferase (419 aa).

(6S)-5,6,7,8-tetrahydrofolate is bound by residues Leu122 and Gly126–Leu128. Lys231 carries the post-translational modification N6-(pyridoxal phosphate)lysine. Ser354–Phe356 is a (6S)-5,6,7,8-tetrahydrofolate binding site.

This sequence belongs to the SHMT family. As to quaternary structure, homodimer. Pyridoxal 5'-phosphate is required as a cofactor.

It is found in the cytoplasm. It carries out the reaction (6R)-5,10-methylene-5,6,7,8-tetrahydrofolate + glycine + H2O = (6S)-5,6,7,8-tetrahydrofolate + L-serine. The protein operates within one-carbon metabolism; tetrahydrofolate interconversion. It participates in amino-acid biosynthesis; glycine biosynthesis; glycine from L-serine: step 1/1. In terms of biological role, catalyzes the reversible interconversion of serine and glycine with tetrahydrofolate (THF) serving as the one-carbon carrier. This reaction serves as the major source of one-carbon groups required for the biosynthesis of purines, thymidylate, methionine, and other important biomolecules. Also exhibits THF-independent aldolase activity toward beta-hydroxyamino acids, producing glycine and aldehydes, via a retro-aldol mechanism. In Exiguobacterium sibiricum (strain DSM 17290 / CCUG 55495 / CIP 109462 / JCM 13490 / 255-15), this protein is Serine hydroxymethyltransferase.